We begin with the raw amino-acid sequence, 559 residues long: Branched-chain-amino-acid aminotransferase-like protein 2 (559 aa).

Belongs to the class-IV pyridoxal-phosphate-dependent aminotransferase family.

This chain is Branched-chain-amino-acid aminotransferase-like protein 2, found in Arabidopsis thaliana (Mouse-ear cress).